Reading from the N-terminus, the 208-residue chain is Baseplate hub assembly protein gp26 (208 aa).

The propeptide occupies 1 to 5; that stretch reads MYEYK.

The protein localises to the virion. Its function is as follows. Baseplate hub assembly chaperone involved in the tail assembly. In Escherichia coli (Bacteriophage T4), this protein is Baseplate hub assembly protein gp26 (26).